Consider the following 338-residue polypeptide: Anthranilate phosphoribosyltransferase (338 aa).

5-phospho-alpha-D-ribose 1-diphosphate contacts are provided by residues Gly-81, 84 to 85 (GD), Thr-89, 91 to 94 (NIST), 109 to 117 (KHGNRSMVS), and Ser-121. Residue Gly-81 coordinates anthranilate. Ser-93 contributes to the Mg(2+) binding site. Position 112 (Asn-112) interacts with anthranilate. Anthranilate is bound at residue Arg-167. Mg(2+)-binding residues include Asp-226 and Glu-227.

Belongs to the anthranilate phosphoribosyltransferase family. In terms of assembly, homodimer. Mg(2+) serves as cofactor.

The catalysed reaction is N-(5-phospho-beta-D-ribosyl)anthranilate + diphosphate = 5-phospho-alpha-D-ribose 1-diphosphate + anthranilate. It participates in amino-acid biosynthesis; L-tryptophan biosynthesis; L-tryptophan from chorismate: step 2/5. Its function is as follows. Catalyzes the transfer of the phosphoribosyl group of 5-phosphorylribose-1-pyrophosphate (PRPP) to anthranilate to yield N-(5'-phosphoribosyl)-anthranilate (PRA). In Acidithiobacillus ferrooxidans (strain ATCC 23270 / DSM 14882 / CIP 104768 / NCIMB 8455) (Ferrobacillus ferrooxidans (strain ATCC 23270)), this protein is Anthranilate phosphoribosyltransferase.